An 87-amino-acid polypeptide reads, in one-letter code: Lantipeptide prochlorosin 3.3 (87 aa).

A propeptide spanning residues 1–64 is cleaved from the precursor; that stretch reads MSEEQLKAFI…DEELEAASGG (64 aa). The residue at position 67 (Thr-67) is a 2,3-didehydrobutyrine. Residues 75–85 constitute a cross-link (beta-methyllanthionine (Thr-Cys)); the sequence is TAGCYGGTKMC. Positions 78-82 form a cross-link, beta-methyllanthionine (Cys-Thr); that stretch reads CYGGT.

In terms of processing, cross-links are proved in vitro, when coepressed in E.coli with the ProcM lanthionine synthetase. The beta-methyllanthionine residues have a DL configuration (with 2S,3S,6R stereochemistry). Post-translationally, maturation of prochlorosin involves the enzymatic conversion of Thr, and Ser into dehydrated AA and the formation of thioether bonds with cysteines. This is followed by membrane translocation and cleavage of the modified precursor.

Its subcellular location is the secreted. Lanthionine-containing peptide (lantipeptide) with unknown function. Does not show antibiotic activity against Lactococcus lactis 117 and Bacillus subtilis 6633 bacteria. Organisms that produce this peptide live in oligotrophic environments at very dilute concentrations, suggesting this peptide is not secreted to influence other bacteria. This Prochlorococcus marinus (strain MIT 9313) protein is Lantipeptide prochlorosin 3.3.